A 218-amino-acid polypeptide reads, in one-letter code: Phosphatidylserine decarboxylase proenzyme (218 aa).

The Schiff-base intermediate with substrate; via pyruvic acid role is filled by Ser-187. Ser-187 is modified (pyruvic acid (Ser); by autocatalysis).

This sequence belongs to the phosphatidylserine decarboxylase family. PSD-A subfamily. Heterodimer of a large membrane-associated beta subunit and a small pyruvoyl-containing alpha subunit. It depends on pyruvate as a cofactor. Is synthesized initially as an inactive proenzyme. Formation of the active enzyme involves a self-maturation process in which the active site pyruvoyl group is generated from an internal serine residue via an autocatalytic post-translational modification. Two non-identical subunits are generated from the proenzyme in this reaction, and the pyruvate is formed at the N-terminus of the alpha chain, which is derived from the carboxyl end of the proenzyme. The post-translation cleavage follows an unusual pathway, termed non-hydrolytic serinolysis, in which the side chain hydroxyl group of the serine supplies its oxygen atom to form the C-terminus of the beta chain, while the remainder of the serine residue undergoes an oxidative deamination to produce ammonia and the pyruvoyl prosthetic group on the alpha chain.

Its subcellular location is the cell membrane. The enzyme catalyses a 1,2-diacyl-sn-glycero-3-phospho-L-serine + H(+) = a 1,2-diacyl-sn-glycero-3-phosphoethanolamine + CO2. The protein operates within phospholipid metabolism; phosphatidylethanolamine biosynthesis; phosphatidylethanolamine from CDP-diacylglycerol: step 2/2. In terms of biological role, catalyzes the formation of phosphatidylethanolamine (PtdEtn) from phosphatidylserine (PtdSer). This chain is Phosphatidylserine decarboxylase proenzyme, found in Geobacter sulfurreducens (strain ATCC 51573 / DSM 12127 / PCA).